A 369-amino-acid polypeptide reads, in one-letter code: Peptidyl-prolyl cis-trans isomerase D (369 aa).

Positions 7–175 (YFDISCNGKP…EDWKIADCGE (169 aa)) constitute a PPIase cyclophilin-type domain. TPR repeat units follow at residues 217–250 (VSKIKDIGTKLLKEGKLEKSYEKYTKANSYLNDY), 268–301 (LSCYLNAALVALKLKHGKDAIAAANNALEVEQID), and 306–339 (TKALYRKGMGYILVKDEEQAQKILEEALELEPND).

This sequence belongs to the cyclophilin-type PPIase family. PPIase D subfamily.

The protein localises to the cytoplasm. It carries out the reaction [protein]-peptidylproline (omega=180) = [protein]-peptidylproline (omega=0). Functionally, PPIases accelerate the folding of proteins. It catalyzes the cis-trans isomerization of proline imidic peptide bonds in oligopeptides. The protein is Peptidyl-prolyl cis-trans isomerase D (CPR6) of Candida albicans (strain SC5314 / ATCC MYA-2876) (Yeast).